A 180-amino-acid chain; its full sequence is MKNIYIVAGFFVVLVQGSWQHSLQDTEEKSRSFPASQTDPLEDPDQINEDKRHSQGTFTSDYSKYLDSRRAQDFVQWLMNTKRNRNNIAKRHDEFERHAEGTFTSDVSSYLEGQAAKEFIAWLVKGRGRRDFPEEVTIVEELGRRHADGSFSDEMNTILDSLATRDFINWLIQTKITDKK.

The signal sequence occupies residues Met-1–Gln-20. Residues Asp-25–Thr-59 are disordered. Ser-54 is modified (phosphoserine). Residues Asn-84–Ala-89 constitute a propeptide that is removed on maturation. A phosphoserine mark is found at Ser-105 and Ser-108. At Arg-127 the chain carries Arginine amide. A propeptide spanning residues Asp-131 to Arg-145 is cleaved from the precursor. Ser-150 and Ser-152 each carry phosphoserine.

Belongs to the glucagon family. In terms of processing, proglucagon is post-translationally processed in a tissue-specific manner in pancreatic A cells and intestinal L cells. In pancreatic A cells, the major bioactive hormone is glucagon cleaved by PCSK2/PC2. In the intestinal L cells PCSK1/PC1 liberates GLP-1, GLP-2, glicentin and oxyntomodulin. GLP-1 is further N-terminally truncated by post-translational processing in the intestinal L cells resulting in GLP-1(7-37) GLP-1-(7-36)amide. The C-terminal amidation is neither important for the metabolism of GLP-1 nor for its effects on the endocrine pancreas.

It is found in the secreted. Plays a key role in glucose metabolism and homeostasis. Regulates blood glucose by increasing gluconeogenesis and decreasing glycolysis. A counterregulatory hormone of insulin, raises plasma glucose levels in response to insulin-induced hypoglycemia. Plays an important role in initiating and maintaining hyperglycemic conditions in diabetes. In terms of biological role, potent stimulator of glucose-dependent insulin release. Also stimulates insulin release in response to IL6. Plays important roles on gastric motility and the suppression of plasma glucagon levels. May be involved in the suppression of satiety and stimulation of glucose disposal in peripheral tissues, independent of the actions of insulin. Has growth-promoting activities on intestinal epithelium. May also regulate the hypothalamic pituitary axis (HPA) via effects on LH, TSH, CRH, oxytocin, and vasopressin secretion. Increases islet mass through stimulation of islet neogenesis and pancreatic beta cell proliferation. Inhibits beta cell apoptosis. Functionally, stimulates intestinal growth and up-regulates villus height in the small intestine, concomitant with increased crypt cell proliferation and decreased enterocyte apoptosis. The gastrointestinal tract, from the stomach to the colon is the principal target for GLP-2 action. Plays a key role in nutrient homeostasis, enhancing nutrient assimilation through enhanced gastrointestinal function, as well as increasing nutrient disposal. Stimulates intestinal glucose transport and decreases mucosal permeability. Its function is as follows. Significantly reduces food intake. Inhibits gastric emptying in humans. Suppression of gastric emptying may lead to increased gastric distension, which may contribute to satiety by causing a sensation of fullness. May modulate gastric acid secretion and the gastro-pyloro-duodenal activity. May play an important role in intestinal mucosal growth in the early period of life. The protein is Pro-glucagon (GCG) of Mesocricetus auratus (Golden hamster).